The primary structure comprises 424 residues: Histidine--tRNA ligase (424 aa).

Belongs to the class-II aminoacyl-tRNA synthetase family. Homodimer.

The protein resides in the cytoplasm. It carries out the reaction tRNA(His) + L-histidine + ATP = L-histidyl-tRNA(His) + AMP + diphosphate + H(+). This Protochlamydia amoebophila (strain UWE25) protein is Histidine--tRNA ligase.